Reading from the N-terminus, the 607-residue chain is Translation initiation factor IF-2 (607 aa).

Positions serine 54 to alanine 93 are disordered. The span at threonine 62–alanine 93 shows a compositional bias: low complexity. One can recognise a tr-type G domain in the interval histidine 108–lysine 281. The G1 stretch occupies residues glycine 117–threonine 124. Glycine 117–threonine 124 is a binding site for GTP. Residues glycine 142–histidine 146 are G2. The tract at residues aspartate 163 to glycine 166 is G3. GTP contacts are provided by residues aspartate 163–histidine 167 and asparagine 217–aspartate 220. Residues asparagine 217–aspartate 220 form a G4 region. Residues serine 253 to lysine 255 form a G5 region.

It belongs to the TRAFAC class translation factor GTPase superfamily. Classic translation factor GTPase family. IF-2 subfamily.

It localises to the cytoplasm. One of the essential components for the initiation of protein synthesis. Protects formylmethionyl-tRNA from spontaneous hydrolysis and promotes its binding to the 30S ribosomal subunits. Also involved in the hydrolysis of GTP during the formation of the 70S ribosomal complex. In Deinococcus deserti (strain DSM 17065 / CIP 109153 / LMG 22923 / VCD115), this protein is Translation initiation factor IF-2.